The chain runs to 458 residues: Glycogen synthase (458 aa).

Residue Lys-15 participates in ADP-alpha-D-glucose binding.

The protein belongs to the glycosyltransferase 1 family. Bacterial/plant glycogen synthase subfamily.

The enzyme catalyses [(1-&gt;4)-alpha-D-glucosyl](n) + ADP-alpha-D-glucose = [(1-&gt;4)-alpha-D-glucosyl](n+1) + ADP + H(+). It functions in the pathway glycan biosynthesis; glycogen biosynthesis. Its function is as follows. Synthesizes alpha-1,4-glucan chains using ADP-glucose. This chain is Glycogen synthase, found in Gloeobacter violaceus (strain ATCC 29082 / PCC 7421).